The sequence spans 206 residues: Max dimerization protein 3 (206 aa).

Positions 8-25 are interaction with SIN3A and SIN3B; that stretch reads IQVLLQAAEFLERREREA. Disordered regions lie at residues 29–66 and 122–171; these read YASLCPHHSPGTVCRRRKPPLQAPGALNSGRSVHNELE and KLRS…QEDL. Residues 57-109 enclose the bHLH domain; that stretch reads SGRSVHNELEKRRRAQLKRCLEQLRQQMPLGVDCTRYTTLSLLRRARVHIQKL. The span at 126–138 shows a compositional bias: low complexity; it reads KQQSLQQQLEQLQ. A compositionally biased stretch (basic and acidic residues) spans 143 to 153; it reads ARERERLRADS.

As to quaternary structure, efficient DNA binding requires dimerization with another bHLH protein. Binds DNA as a heterodimer with MAX. Interacts with SIN3A AND SIN3B. Interacts with RNF17. In terms of tissue distribution, expressed only in the proliferating areas of the testis and thymus.

The protein resides in the nucleus. In terms of biological role, transcriptional repressor. Binds with MAX to form a sequence-specific DNA-binding protein complex which recognizes the core sequence 5'-CAC[GA]TG-3'. Antagonizes MYC transcriptional activity by competing for MAX and suppresses MYC dependent cell transformation. This Mus musculus (Mouse) protein is Max dimerization protein 3 (Mxd3).